The chain runs to 319 residues: ATP-dependent 6-phosphofructokinase (319 aa).

Residue glycine 11 coordinates ATP. An ADP-binding site is contributed by 21 to 25 (RAVTR). ATP-binding positions include 72–73 (RF) and 102–105 (GDGS). Aspartate 103 is a binding site for Mg(2+). 125–127 (SID) is a substrate binding site. Catalysis depends on aspartate 127, which acts as the Proton acceptor. Residue arginine 154 coordinates ADP. Residues arginine 162 and 169-171 (MGR) contribute to the substrate site. ADP is bound by residues 185-187 (GAD) and 213-215 (KKH). Residues glutamate 222, arginine 243, and 249 to 252 (HMQR) contribute to the substrate site.

This sequence belongs to the phosphofructokinase type A (PFKA) family. ATP-dependent PFK group I subfamily. Prokaryotic clade 'B1' sub-subfamily. In terms of assembly, homotetramer. Requires Mg(2+) as cofactor.

Its subcellular location is the cytoplasm. It carries out the reaction beta-D-fructose 6-phosphate + ATP = beta-D-fructose 1,6-bisphosphate + ADP + H(+). The protein operates within carbohydrate degradation; glycolysis; D-glyceraldehyde 3-phosphate and glycerone phosphate from D-glucose: step 3/4. Allosterically activated by ADP and other diphosphonucleosides, and allosterically inhibited by phosphoenolpyruvate. Functionally, catalyzes the phosphorylation of D-fructose 6-phosphate to fructose 1,6-bisphosphate by ATP, the first committing step of glycolysis. This is ATP-dependent 6-phosphofructokinase from Lactobacillus johnsonii (strain CNCM I-12250 / La1 / NCC 533).